The primary structure comprises 239 residues: Tubulin beta-3 chain (239 aa).

Asn-22 provides a ligand contact to GTP. Residues 207-239 (EESNMNDLVSEYQQYQDASAEPXXEQEEDYEEA) form a disordered region. The span at 230–239 (XEQEEDYEEA) shows a compositional bias: acidic residues.

This sequence belongs to the tubulin family. As to quaternary structure, dimer of alpha and beta chains. A typical microtubule is a hollow water-filled tube with an outer diameter of 25 nm and an inner diameter of 15 nM. Alpha-beta heterodimers associate head-to-tail to form protofilaments running lengthwise along the microtubule wall with the beta-tubulin subunit facing the microtubule plus end conferring a structural polarity. Microtubules usually have 13 protofilaments but different protofilament numbers can be found in some organisms and specialized cells. Mg(2+) is required as a cofactor.

The protein resides in the cytoplasm. Its subcellular location is the cytoskeleton. Its function is as follows. Tubulin is the major constituent of microtubules, a cylinder consisting of laterally associated linear protofilaments composed of alpha- and beta-tubulin heterodimers. Microtubules grow by the addition of GTP-tubulin dimers to the microtubule end, where a stabilizing cap forms. Below the cap, tubulin dimers are in GDP-bound state, owing to GTPase activity of alpha-tubulin. In Anemia phyllitidis (Fern), this protein is Tubulin beta-3 chain (TUBB3).